We begin with the raw amino-acid sequence, 174 residues long: Small ribosomal subunit protein uS5 (174 aa).

In terms of domain architecture, S5 DRBM spans 18-81 (LKDRLVSVNR…EDAKKNLVKI (64 aa)).

It belongs to the universal ribosomal protein uS5 family. In terms of assembly, part of the 30S ribosomal subunit. Contacts proteins S4 and S8.

Its function is as follows. With S4 and S12 plays an important role in translational accuracy. Located at the back of the 30S subunit body where it stabilizes the conformation of the head with respect to the body. The polypeptide is Small ribosomal subunit protein uS5 (Flavobacterium psychrophilum (strain ATCC 49511 / DSM 21280 / CIP 103535 / JIP02/86)).